The primary structure comprises 194 residues: Extracellular globin-E1 (194 aa).

2 consecutive Globin domains span residues 1–45 (DISH…MGLS) and 55–194 (GLSG…LRQA). His-150 is a binding site for heme b.

Belongs to the globin family. In terms of assembly, artemia hemoglobin is a dimer of two similar sized subunits. Each subunit represents a globin chain which exists in two forms (alpha and beta), thus making possible three different phenotypes (HB1, alpha(2), HB2, alpha/beta, HB3, beta(2)). The globin chain is a polymer of eight heme-binding covalently linked domains.

This Artemia sp. (Brine shrimp) protein is Extracellular globin-E1.